We begin with the raw amino-acid sequence, 4116 residues long: Dynein axonemal heavy chain 3 (4116 aa).

Disordered regions lie at residues 1-68 and 137-172; these read MGAT…ANEE and VPRD…KEDS. Residues 1–1390 are stem; the sequence is MGATGRLELT…QVQIITTEAL (1390 aa). Positions 145-156 are enriched in polar residues; the sequence is GLPSSGNRSSSE. The stretch at 785–852 forms a coiled coil; it reads DLIKRCSEFE…NKEEELLEKE (68 aa). AAA stretches follow at residues 1391–1612, 1672–1903, 2036–2284, and 2395–2646; these read YGYE…VLTA, KVLN…LHCK, KVPA…VIQG, and EFNN…LRRH. ATP-binding positions include 1429-1436, 1710-1717, 2074-2081, and 2434-2441; these read GPAGTGKT, GDPMGGKT, GPTGTGKS, and GIGGSGRQ. The stalk stretch occupies residues 2661–2960; sequence FKTLLNSKRQ…KDLEENIEIC (300 aa). AAA regions lie at residues 3045–3275 and 3488–3712; these read LGDP…EISE and VREF…QIQM.

It belongs to the dynein heavy chain family. As to quaternary structure, consists of at least two heavy chains and a number of intermediate and light chains. In terms of tissue distribution, expressed primarily in trachea and testis, 2 tissues containing axonemal structures. Also expressed in lung.

It localises to the cytoplasm. The protein localises to the cytoskeleton. It is found in the cilium axoneme. Functionally, force generating protein of respiratory cilia. Produces force towards the minus ends of microtubules. Dynein has ATPase activity; the force-producing power stroke is thought to occur on release of ADP. Involved in sperm motility; implicated in sperm flagellar assembly. This Homo sapiens (Human) protein is Dynein axonemal heavy chain 3 (DNAH3).